Here is a 474-residue protein sequence, read N- to C-terminus: MLRIAILGRPNVGKSSLFNRMCKRSLAIVNSQEGTTRDRLYGEIRGWSVPVQVIDTGGVDKDSEDHFQKHIYKQALAGANEADILLLVVDIRCGITEQDAELAKMLLPLNKPLILVANKADTFKDEHRIHELYKLGISEILAVSASHDKHIDKLLQRIKTLGNVPEVVEEFSEEEVEEEAVPSMELLSKEPLSDYEEEEIPFSTTSAPDKPLKIALIGRPNVGKSSIINGLLNEERCIIDNVPGTTRDNVDILYSHNDRSYLFIDTAGLRKMKSVKNSIEWISSSRTEKAIARADVCLLVIDAQHHLSSYDKRILSLISKHKKPHIILVNKWDLIEGVRMEHYIRDLRATDVYIGQSRILCISAATKRNLRHIFSSIDELYETVSSKVPTPVVNKTLASTLQKHHPQVINGRRLRIYYAIHKTATPFQFLLFINAKSLLTKHYECYLRNTLKSSFNLYGIPFDLEFKEKTKRTN.

2 consecutive EngA-type G domains span residues 2–166 and 212–385; these read LRIA…NVPE and LKIA…ETVS. GTP contacts are provided by residues 8–15, 55–59, 118–121, 218–225, 265–269, and 330–333; these read GRPNVGKS, DTGGV, NKAD, DTAGL, and NKWD. The KH-like domain maps to 386 to 470; the sequence is SKVPTPVVNK…PFDLEFKEKT (85 aa).

This sequence belongs to the TRAFAC class TrmE-Era-EngA-EngB-Septin-like GTPase superfamily. EngA (Der) GTPase family. As to quaternary structure, associates with the 50S ribosomal subunit.

Functionally, GTPase that plays an essential role in the late steps of ribosome biogenesis. This Chlamydia caviae (strain ATCC VR-813 / DSM 19441 / 03DC25 / GPIC) (Chlamydophila caviae) protein is GTPase Der.